Here is a 259-residue protein sequence, read N- to C-terminus: Putative electron transfer flavoprotein subunit YgcR (259 aa).

This sequence belongs to the ETF beta-subunit/FixA family. YgcQ and YgcR form a heterodimer.

May play a role in a redox process. The sequence is that of Putative electron transfer flavoprotein subunit YgcR (ygcR) from Escherichia coli (strain K12).